The following is a 183-amino-acid chain: Mitochondrial inner membrane protease subunit 2 (183 aa).

The chain crosses the membrane as a helical span at residues 13–35 (AFVSGFFVAVPVTVTVLDRLAYV). Catalysis depends on residues serine 42 and lysine 90. The interval 161–183 (SVPPDRRPLLNWDRAAEDKYDDD) is disordered. Residues 164–183 (PDRRPLLNWDRAAEDKYDDD) are compositionally biased toward basic and acidic residues.

It belongs to the peptidase S26 family. IMP2 subfamily. In terms of assembly, heterodimer of 2 subunits, IMMPL1 and IMMPL2.

The protein resides in the mitochondrion inner membrane. Functionally, catalyzes the removal of transit peptides required for the targeting of proteins from the mitochondrial matrix, across the inner membrane, into the inter-membrane space. The chain is Mitochondrial inner membrane protease subunit 2 (immp2l) from Danio rerio (Zebrafish).